Consider the following 503-residue polypeptide: Protein phosphatase eya-1 (503 aa).

Asp-237 (nucleophile) is an active-site residue. Mg(2+) is bound by residues Asp-237 and Asp-239. Asp-239 serves as the catalytic Proton donor.

This sequence belongs to the HAD-like hydrolase superfamily. EYA family. Interacts (via C-terminus) with ceh-34 (via N-terminus). Mg(2+) serves as cofactor. As to expression, expressed in body wall muscles. Expressed in BAG sensory neurons and in other head neurons.

The protein localises to the nucleus. The enzyme catalyses O-phospho-L-tyrosyl-[protein] + H2O = L-tyrosyl-[protein] + phosphate. Tyrosine protein phosphatase. Acts probably as a transcription regulator in the embryonic and postembryonic development of several tissues including pharynx, vulva and gonads. Required for the development of anterior tissues during late embryogenesis. Together with ceh-34, required to specify the coelomocyte fate in embryonic and postembryonic precursors. In the anterior part of the embryo, prevents apoptosis in cells that are not fated to die. Together with ceh-34 activates proapoptotic factor egl-1 expression to promote motor neuron M4 sister cell apoptosis. Also promotes apoptosis of I1 pharyngeal neuron sister cell. Plays a role in locomotion and fertility. May play a role in resistance to heat and oxidative stresses. May cooperate with the transcription factors vab-3 and ceh-32 to repress transcription factor ets-5 expression in non BAG neuronal cells. The protein is Protein phosphatase eya-1 of Caenorhabditis elegans.